The sequence spans 286 residues: tRNA (guanine-N(7)-)-methyltransferase (286 aa).

Serine 7 and serine 59 each carry phosphoserine. S-adenosyl-L-methionine contacts are provided by residues glycine 103, 126-127 (EI), 161-162 (NA), and cysteine 181. Aspartate 184 is a catalytic residue. 259-261 (TEE) lines the S-adenosyl-L-methionine pocket.

This sequence belongs to the class I-like SAM-binding methyltransferase superfamily. TrmB family. In terms of assembly, forms a complex with TRM82.

The protein resides in the nucleus. The catalysed reaction is guanosine(46) in tRNA + S-adenosyl-L-methionine = N(7)-methylguanosine(46) in tRNA + S-adenosyl-L-homocysteine. It participates in tRNA modification; N(7)-methylguanine-tRNA biosynthesis. In terms of biological role, methyltransferase that catalyzes the formation of N(7)-methylguanine at position 46 (m7G46) in tRNA, a modification required to maintain stability of tRNAs; its absence resulting in tRNA decay. Both the D-stem and T-stem structures of tRNAs are required for efficient methyltransferase activity. The polypeptide is tRNA (guanine-N(7)-)-methyltransferase (Saccharomyces cerevisiae (strain RM11-1a) (Baker's yeast)).